A 328-amino-acid polypeptide reads, in one-letter code: Aryl-hydrocarbon-interacting protein-like 1 (328 aa).

The PPIase FKBP-type domain occupies 53 to 145 (KQVGQPMSII…DLDELQKEPQ (93 aa)). 3 TPR repeats span residues 178–211 (VPLL…LRNL), 230–263 (NTLI…HPGI), and 264–297 (VKAY…EPSM).

As to quaternary structure, interacts with NUB1.

Its subcellular location is the cytoplasm. The protein resides in the nucleus. Functionally, may be important in protein trafficking and/or protein folding and stabilization. This Mus musculus (Mouse) protein is Aryl-hydrocarbon-interacting protein-like 1 (Aipl1).